A 663-amino-acid chain; its full sequence is UvrABC system protein B (663 aa).

One can recognise a Helicase ATP-binding domain in the interval 26–414; sequence DGLESGLAKQ…DNVAEQVVRP (389 aa). 39–46 serves as a coordination point for ATP; the sequence is GVTGSGKT. Positions 92–115 match the Beta-hairpin motif; sequence YYDYYQPEAYVPASDTFIEKDASI. The 167-residue stretch at 430–596 folds into the Helicase C-terminal domain; sequence QVDDLMSEIR…GINKSVEDIL (167 aa). Residues 624–659 form the UVR domain; it reads VKQINALEKQMYSHAQNMEFELAAKIRDEYLLLKEQ.

The protein belongs to the UvrB family. In terms of assembly, forms a heterotetramer with UvrA during the search for lesions. Interacts with UvrC in an incision complex.

The protein localises to the cytoplasm. Its function is as follows. The UvrABC repair system catalyzes the recognition and processing of DNA lesions. A damage recognition complex composed of 2 UvrA and 2 UvrB subunits scans DNA for abnormalities. Upon binding of the UvrA(2)B(2) complex to a putative damaged site, the DNA wraps around one UvrB monomer. DNA wrap is dependent on ATP binding by UvrB and probably causes local melting of the DNA helix, facilitating insertion of UvrB beta-hairpin between the DNA strands. Then UvrB probes one DNA strand for the presence of a lesion. If a lesion is found the UvrA subunits dissociate and the UvrB-DNA preincision complex is formed. This complex is subsequently bound by UvrC and the second UvrB is released. If no lesion is found, the DNA wraps around the other UvrB subunit that will check the other stand for damage. This chain is UvrABC system protein B, found in Legionella pneumophila subsp. pneumophila (strain Philadelphia 1 / ATCC 33152 / DSM 7513).